We begin with the raw amino-acid sequence, 230 residues long: Cytidylate kinase (230 aa).

Residue Gly12–Thr20 participates in ATP binding.

This sequence belongs to the cytidylate kinase family. Type 1 subfamily.

It localises to the cytoplasm. The enzyme catalyses CMP + ATP = CDP + ADP. It catalyses the reaction dCMP + ATP = dCDP + ADP. This Corynebacterium glutamicum (strain ATCC 13032 / DSM 20300 / JCM 1318 / BCRC 11384 / CCUG 27702 / LMG 3730 / NBRC 12168 / NCIMB 10025 / NRRL B-2784 / 534) protein is Cytidylate kinase.